We begin with the raw amino-acid sequence, 41 residues long: Photosystem I reaction center subunit IX (41 aa).

The chain crosses the membrane as a helical span at residues 7 to 27 (YLSTAPVIALAWMSFTAGLLI).

The protein belongs to the PsaJ family.

Its subcellular location is the plastid. The protein localises to the chloroplast thylakoid membrane. Its function is as follows. May help in the organization of the PsaE and PsaF subunits. The chain is Photosystem I reaction center subunit IX from Tupiella akineta (Green alga).